We begin with the raw amino-acid sequence, 153 residues long: ORM1-like protein 3 (153 aa).

At 1 to 21 the chain is on the cytoplasmic side; sequence MNVGTAHSEVNPNTRVMNSRG. 2 helical membrane-spanning segments follow: residues 22-42 and 43-63; these read IWLS…SIPF and VSVP…MYIF. The Cytoplasmic segment spans residues 64–94; sequence LHTVKGTPFETPDQGKARLLTHWEQMDYGVQ. Residues 95-117 traverse the membrane as a helical segment; that stretch reads FTASRKFLTITPIILYFLTSFYT. Residues 118-121 are Extracellular-facing; sequence KYDR. The helical transmembrane segment at 122–142 threads the bilayer; it reads VHFVINTISLLTVLIPKLPQF. Position 137 is a hydroxyproline (Pro-137). Residues 143-153 are Cytoplasmic-facing; that stretch reads HGVRLFGINKY.

Belongs to the ORM family. As to quaternary structure, ceramide-sensitive subunit of the serine palmitoyltransferase (SPT) complex, which is also composed of SPTLC1, SPTLC2/3 and SPTSSA/B. Post-translationally, when hydroxylated at Pro-137, ubiquitinated via 'Lys-48'-linkage, leading to proteasomal degradation. In endothelial cells, ORMDL3 proteasomal degradation is controlled by the sphingosine 1-phosphate receptor signaling pathway.

Its subcellular location is the endoplasmic reticulum membrane. Plays an essential role in the homeostatic regulation of sphingolipid de novo biosynthesis by modulating the activity of the serine palmitoyltransferase (SPT) in response to ceramide levels. When complexed to SPT, the binding of ceramides to its N-terminus stabilizes a conformation that block SPT substrate entry, hence preventing SPT catalytic activity. Through this mechanism, maintains ceramide levels at sufficient concentrations for the production of complex sphingolipids, but which prevents the accumulation of ceramides to levels that trigger apoptosis. This Danio rerio (Zebrafish) protein is ORM1-like protein 3 (ormdl3).